We begin with the raw amino-acid sequence, 427 residues long: O-methyltransferase sol2 (427 aa).

D281 is an S-adenosyl-L-methionine binding site. Catalysis depends on H327, which acts as the Proton acceptor.

Belongs to the class I-like SAM-binding methyltransferase superfamily. Cation-independent O-methyltransferase family. COMT subfamily.

The protein operates within phytotoxin biosynthesis. In terms of biological role, O-methyltransferase; part of the gene cluster that mediates the biosynthesis of the phytotoxin solanapyrone, a causal agent of early blight disease of potato and tomato. The prosolanapyrone synthase sol1 is a polyketide synthase that produces the octaketide desmethylprosolanapyrone I via sequential condensations of 7 malonyl-CoA units with one acetyl-CoA unit, and one methylation step. The octaketide backbone is further methylated by the sol2 O-methyltransferase to yield prosolanapyrone I. Prosolanapyrone I is hydroxylated to prosolanapyrone II by the cytochrome P450 monooxygenase sol6. The solanapyrone synthase sol5 then catalyzes the oxidation of prosolanapyrone II and the subsequent Diels Alder cycloisomerization of the product prosolanapyrone III to solanapyrones A and D. Solanapyrones A and D are then converted into solanapyrones B and E, respectively, by the sol3 dehydrogenase. The protein is O-methyltransferase sol2 (sol2) of Alternaria solani.